The chain runs to 100 residues: RxLR effector protein SFI8 (100 aa).

The first 22 residues, 1–22 (MRSILYAVLAFAVLARSSAVAA), serve as a signal peptide directing secretion. The RxLR-dEER signature appears at 43–57 (RSLRVEAQEVIQSGR). The Calmodulin-binding motif motif lies at 78–82 (KPDIK).

The protein belongs to the RxLR effector family. In terms of assembly, interacts with the host calmodulin.

Its subcellular location is the secreted. The protein localises to the host nucleus. The protein resides in the host cytoplasm. Its function is as follows. Effector that suppresses flg22-induced post-translational MAP kinase activation both tomato and Arabidopsis. The perception of highly conserved pathogen- or microbe-associated molecular patterns (PAMPs/MAMPs), such as flg22, triggers converging signaling pathways recruiting MAP kinase cascades and inducing transcriptional re-programming, yielding a generic antimicrobial response. Associates with calmodulin to interfere with plant defense-associated calcium signaling in hosts. The polypeptide is RxLR effector protein SFI8 (Phytophthora infestans (strain T30-4) (Potato late blight agent)).